A 224-amino-acid chain; its full sequence is Cytidylate kinase (224 aa).

Residue 12–20 participates in ATP binding; it reads GPAGAGKST.

This sequence belongs to the cytidylate kinase family. Type 1 subfamily.

Its subcellular location is the cytoplasm. It catalyses the reaction CMP + ATP = CDP + ADP. The catalysed reaction is dCMP + ATP = dCDP + ADP. This Caldanaerobacter subterraneus subsp. tengcongensis (strain DSM 15242 / JCM 11007 / NBRC 100824 / MB4) (Thermoanaerobacter tengcongensis) protein is Cytidylate kinase.